The primary structure comprises 150 residues: UPF0178 protein PputGB1_5282 (150 aa).

It belongs to the UPF0178 family.

The chain is UPF0178 protein PputGB1_5282 from Pseudomonas putida (strain GB-1).